A 295-amino-acid chain; its full sequence is Zinc finger CCCH domain-containing protein 44 (295 aa).

The segment at 1 to 31 (MEAGGGKRAAPEGTNGAAKRARASESSQVGV) is disordered. 2 C3H1-type zinc fingers span residues 32-60 (GSKL…HNFP) and 98-126 (SVKT…HGER). The KH domain maps to 166–230 (SATAKISVDA…DQIKHASAMV (65 aa)). The C3H1-type 3 zinc-finger motif lies at 259 to 286 (NFKTKLCENFNKGSCTFGDRCHFAHGES).

This is Zinc finger CCCH domain-containing protein 44 from Oryza sativa subsp. japonica (Rice).